Reading from the N-terminus, the 366-residue chain is tRNA/tmRNA (uracil-C(5))-methyltransferase (366 aa).

The S-adenosyl-L-methionine site is built by glutamine 190, tyrosine 218, asparagine 223, glutamate 239, and aspartate 299. The active-site Nucleophile is the cysteine 324. Glutamate 358 functions as the Proton acceptor in the catalytic mechanism.

It belongs to the class I-like SAM-binding methyltransferase superfamily. RNA M5U methyltransferase family. TrmA subfamily.

It carries out the reaction uridine(54) in tRNA + S-adenosyl-L-methionine = 5-methyluridine(54) in tRNA + S-adenosyl-L-homocysteine + H(+). The enzyme catalyses uridine(341) in tmRNA + S-adenosyl-L-methionine = 5-methyluridine(341) in tmRNA + S-adenosyl-L-homocysteine + H(+). Its function is as follows. Dual-specificity methyltransferase that catalyzes the formation of 5-methyluridine at position 54 (m5U54) in all tRNAs, and that of position 341 (m5U341) in tmRNA (transfer-mRNA). This is tRNA/tmRNA (uracil-C(5))-methyltransferase from Klebsiella pneumoniae (strain 342).